A 326-amino-acid chain; its full sequence is Adenosine receptor A1 (326 aa).

At 1–10 the chain is on the extracellular side; sequence MPPAISAFQA. A helical transmembrane segment spans residues 11 to 33; it reads AYIGIEVLIALVSVPGNVLVIWA. Residues 34–46 are Cytoplasmic-facing; sequence VKVNQALRDATFC. A helical membrane pass occupies residues 47 to 69; the sequence is FIVSLAVADVAVGALVIPLAILI. Residues 70 to 80 are Extracellular-facing; the sequence is NIGPRTYFHTC. A disulfide bond links C80 and C169. Residues 81 to 102 form a helical membrane-spanning segment; the sequence is LMVACPVLILTQSSILALLAIA. The Cytoplasmic portion of the chain corresponds to 103 to 123; that stretch reads VDRYLRVKIPLRYKTVVTPRR. A helical transmembrane segment spans residues 124–146; sequence AAVAIAGCWILSFVVGLTPLFGW. The Extracellular portion of the chain corresponds to 147–176; it reads NRLGEAQRAWAANGSGGEPVIKCEFEKVIS. N159 carries an N-linked (GlcNAc...) asparagine glycan. A helical membrane pass occupies residues 177–201; it reads MEYMVYFNFFVWVLPPLLLMVLIYL. Topologically, residues 202–235 are cytoplasmic; sequence EVFYLIRRQLGKKVSASSGDPQKYYGKELKIAKS. A helical transmembrane segment spans residues 236–259; sequence LALILFLFALSWLPLHILNCITLF. Residues 260–267 lie on the Extracellular side of the membrane; that stretch reads CPSCRKPS. A helical membrane pass occupies residues 268–292; it reads ILMYIAIFLTHGNSAMNPIVYAFRI. Residues 293–326 lie on the Cytoplasmic side of the membrane; the sequence is QKFRVTFLKIWNDHFRCQPTPPVDEDPPEEAPHD. C309 carries the S-palmitoyl cysteine lipid modification.

Belongs to the G-protein coupled receptor 1 family.

The protein resides in the cell membrane. Functionally, receptor for adenosine. The activity of this receptor is mediated by G proteins which inhibit adenylyl cyclase. This Canis lupus familiaris (Dog) protein is Adenosine receptor A1 (ADORA1).